A 259-amino-acid polypeptide reads, in one-letter code: Ribosomal RNA small subunit methyltransferase J (259 aa).

S-adenosyl-L-methionine is bound by residues 101–102 (RD), 117–118 (ER), 153–154 (SS), and Asp-176.

It belongs to the methyltransferase superfamily. RsmJ family.

Its subcellular location is the cytoplasm. The catalysed reaction is guanosine(1516) in 16S rRNA + S-adenosyl-L-methionine = N(2)-methylguanosine(1516) in 16S rRNA + S-adenosyl-L-homocysteine + H(+). In terms of biological role, specifically methylates the guanosine in position 1516 of 16S rRNA. The polypeptide is Ribosomal RNA small subunit methyltransferase J (Vibrio vulnificus (strain CMCP6)).